The chain runs to 478 residues: Septin-4 (478 aa).

A disordered region spans residues 1–115 (MDRSLGWQGN…RSPWGKLDPY (115 aa)). A compositionally biased stretch (basic and acidic residues) spans 13–26 (PEDRTEAGIKRFLE). Positions 95-108 (APAPLSPSARPRSP) are enriched in low complexity. Residues Ser-117 and Ser-118 each carry the phosphoserine modification. A Septin-type G domain is found at 141–414 (KGFDFTLMVA…ENYRAQCIQS (274 aa)). Residues 151–158 (GESGLGKS) are G1 motif. GTP contacts are provided by residues 151–158 (GESGLGKS) and Thr-185. The segment at 208-211 (DTPG) is G3 motif. A G4 motif region spans residues 289–292 (AKAD). GTP is bound at residue 290–298 (KADTLTPPE). Residue Ser-325 is modified to Phosphoserine. 2 residues coordinate GTP: Gly-348 and Arg-363. Residues 428–448 (LTRESGTDFPIPAVPPGTDPE) are disordered. Ser-432 is modified (phosphoserine). Thr-434 bears the Phosphothreonine mark. Positions 447–478 (PETEKLIREKDEELRRMQEMLHKIQKQMKENY) form a coiled coil.

Belongs to the TRAFAC class TrmE-Era-EngA-EngB-Septin-like GTPase superfamily. Septin GTPase family. Septins polymerize into heterooligomeric protein complexes that form filaments, and can associate with cellular membranes, actin filaments and microtubules. GTPase activity is required for filament formation. Interacts with SEPTIN8. In a mesenchymal cell line, interacts with SEPTIN9 isoform 2 variants HNA Trp-106 and Phe-111, but not the wild type SEPTIN9. Component of a septin core octameric complex consisting of SEPTIN12, SEPTIN7, SEPTIN6 and SEPTIN2 or SEPTIN4 in the order 12-7-6-2-2-6-7-12 or 12-7-6-4-4-6-7-12. Interacts with SEPTIN14 (via C-terminus). Interacts with DYRK1A. Interacts with SLC6A3/DAT and SNCA/alpha-synuclein. Interacts with STX1A; in the striatum. Interacts with XIAP (via BIR3 domain) following the induction of apoptosis. Interacts with AREL1 (via HECT domain); in the cytoplasm following induction of apoptosis. In terms of assembly, part of a complex composed of SEPTIN4 isoform ARTS, XIAP and BCL2, within the complex interacts with both BCL2 (via BH3 domain) and XIAP, ARTS acts as a scaffold protein and stabilizes the complex. Interacts with XIAP (via BIR3 domain) following the induction of apoptosis. Post-translationally, phosphorylated by DYRK1A. Ubiquitinated by AREL1. As to expression, widely expressed in adult and fetal tissues with highest expression in adult brain (at protein level), heart, liver and adrenal gland and fetal heart, kidney, liver and lung. Expressed in presynaptic terminals of dopaminergic neurons projecting from the substantia nigra pars compacta to the striatum (at protein level). Expressed in axonal varicosities in dopaminergic nerve terminals (at protein level). Expressed in the putamen and in the adjacent cerebral cortex (at protein level). Expressed in colonic crypts (at protein level). Also expressed in colorectal cancers and malignant melanomas. Expressed in platelets. Highly expressed in the brain and heart.

The protein resides in the cytoplasm. Its subcellular location is the cell projection. It localises to the cilium. It is found in the flagellum. The protein localises to the cytoplasmic vesicle. The protein resides in the secretory vesicle. Its subcellular location is the axon. It localises to the dendrite. It is found in the perikaryon. The protein localises to the synapse. The protein resides in the mitochondrion. Its subcellular location is the nucleus. Filament-forming cytoskeletal GTPase. Pro-apoptotic protein involved in LGR5-positive intestinal stem cell and Paneth cell expansion in the intestines, via its interaction with XIAP. May also play a role in the regulation of cell fate in the intestine. Positive regulator of apoptosis involved in hematopoietic stem cell homeostasis; via its interaction with XIAP. Negative regulator of repair and hair follicle regeneration in response to injury, due to inhibition of hair follicle stem cell proliferation, potentially via its interaction with XIAP. Plays an important role in male fertility and sperm motility. During spermiogenesis, essential for the establishment of the annulus (a fibrous ring structure connecting the midpiece and the principal piece of the sperm flagellum) which is a requisite for the structural and mechanical integrity of the sperm. Involved in the migration of cortical neurons and the formation of neuron leading processes during embryonic development. Required for dopaminergic metabolism in presynaptic autoreceptors; potentially via activity as a presynaptic scaffold protein. Its function is as follows. Required for the induction of cell death mediated by TGF-beta and possibly by other apoptotic stimuli. Induces apoptosis through binding and inhibition of XIAP resulting in significant reduction in XIAP levels, leading to caspase activation and cell death. Mediates the interaction between BCL2 and XIAP, thereby positively regulating the ubiquitination and degradation of BCL2 and promoting apoptosis. This chain is Septin-4, found in Homo sapiens (Human).